The primary structure comprises 96 residues: Citrate lyase acyl carrier protein (96 aa).

Ser14 is subject to O-(phosphoribosyl dephospho-coenzyme A)serine.

The protein belongs to the CitD family. Oligomer with a subunit composition of (alpha,beta,gamma)6.

The protein resides in the cytoplasm. Functionally, covalent carrier of the coenzyme of citrate lyase. In Pectobacterium carotovorum subsp. carotovorum (strain PC1), this protein is Citrate lyase acyl carrier protein.